The sequence spans 376 residues: N-acetyldiaminopimelate deacetylase (376 aa).

Aspartate 69 is a catalytic residue. Residue glutamate 128 is the Proton acceptor of the active site.

Belongs to the peptidase M20A family. N-acetyldiaminopimelate deacetylase subfamily.

It carries out the reaction N-acetyl-(2S,6S)-2,6-diaminopimelate + H2O = (2S,6S)-2,6-diaminopimelate + acetate. Its pathway is amino-acid biosynthesis; L-lysine biosynthesis via DAP pathway; LL-2,6-diaminopimelate from (S)-tetrahydrodipicolinate (acetylase route): step 3/3. In terms of biological role, catalyzes the conversion of N-acetyl-diaminopimelate to diaminopimelate and acetate. This chain is N-acetyldiaminopimelate deacetylase, found in Bacillus anthracis (strain A0248).